We begin with the raw amino-acid sequence, 550 residues long: Glucose-6-phosphate isomerase (550 aa).

Glu356 acts as the Proton donor in catalysis. Catalysis depends on residues His387 and Lys515.

This sequence belongs to the GPI family.

Its subcellular location is the cytoplasm. The enzyme catalyses alpha-D-glucose 6-phosphate = beta-D-fructose 6-phosphate. Its pathway is carbohydrate biosynthesis; gluconeogenesis. It participates in carbohydrate degradation; glycolysis; D-glyceraldehyde 3-phosphate and glycerone phosphate from D-glucose: step 2/4. Catalyzes the reversible isomerization of glucose-6-phosphate to fructose-6-phosphate. This is Glucose-6-phosphate isomerase from Vibrio vulnificus (strain YJ016).